Here is a 427-residue protein sequence, read N- to C-terminus: 5-hydroxybenzimidazole synthase BzaA (427 aa).

Belongs to the ThiC family. 5-hydroxybenzimidazole synthase subfamily. [4Fe-4S] cluster serves as cofactor.

It catalyses the reaction 5-amino-1-(5-phospho-beta-D-ribosyl)imidazole + AH2 + S-adenosyl-L-methionine = 5-hydroxybenzimidazole + 5'-deoxyadenosine + formate + L-methionine + A + NH4(+) + phosphate + 2 H(+). It participates in cofactor biosynthesis; adenosylcobalamin biosynthesis. Functionally, together with BzaB, catalyzes the conversion of aminoimidazole ribotide (AIR) to 5-hydroxybenzimidazole (5-HBI) in a radical S-adenosyl-L-methionine (SAM)-dependent reaction. Is thus involved in the anaerobic biosynthesis of dimethylbenzimidazole (DMB), the lower axial ligand of vitamin B12 (cobalamin). Requires BzaB for catalytic activity, as BzaA alone displays no activity. This chain is 5-hydroxybenzimidazole synthase BzaA, found in Eubacterium limosum.